Reading from the N-terminus, the 71-residue chain is MIFKVFYQENADEVPVREKTKTLYIEAESERDVRRKLEGRPINIEYIQPLEGAHLEYEKKSPNFQVLEISS.

It belongs to the RNA polymerase subunit epsilon family. As to quaternary structure, monomer. RNAP is composed of a core of 2 alpha, a beta and a beta' subunit. The core is associated with a delta subunit, and at least one of epsilon or omega. When a sigma factor is associated with the core the holoenzyme is formed, which can initiate transcription.

The catalysed reaction is RNA(n) + a ribonucleoside 5'-triphosphate = RNA(n+1) + diphosphate. Its function is as follows. A non-essential component of RNA polymerase (RNAP). Has a similar structure to bacteriophage T7 protein Gp2 (AC P03704), which is known to bind to RNAP in the DNA binding-cleft. Unlike Gp2 however, this protein does not inhibit transcription initiation. In Geobacillus stearothermophilus (strain DSM 13240 / CIP 106956 / 10), this protein is DNA-directed RNA polymerase subunit epsilon.